Reading from the N-terminus, the 246-residue chain is Osmotin-like protein OSML13 (246 aa).

Positions 1–21 are cleaved as a signal peptide; the sequence is MAYLRSSFVFFLLAFVTYTYA. Intrachain disulfides connect Cys-30–Cys-225, Cys-72–Cys-82, Cys-87–Cys-93, Cys-141–Cys-213, Cys-146–Cys-196, Cys-154–Cys-164, Cys-168–Cys-177, and Cys-178–Cys-183.

The protein belongs to the thaumatin family.

The protein is Osmotin-like protein OSML13 of Solanum commersonii (Commerson's wild potato).